Consider the following 406-residue polypeptide: 3-phosphoshikimate 1-carboxyvinyltransferase (406 aa).

Lys20, Ser21, and Arg25 together coordinate 3-phosphoshikimate. Lys20 is a binding site for phosphoenolpyruvate. Phosphoenolpyruvate is bound by residues Gly84 and Arg112. 3-phosphoshikimate-binding residues include Ser155, Ser156, Gln157, Asp295, Gln317, and Lys321. Gln157 is a phosphoenolpyruvate binding site. The active-site Proton acceptor is Asp295. Phosphoenolpyruvate contacts are provided by Arg325, Arg366, and Lys392.

This sequence belongs to the EPSP synthase family. In terms of assembly, monomer.

It localises to the cytoplasm. The catalysed reaction is 3-phosphoshikimate + phosphoenolpyruvate = 5-O-(1-carboxyvinyl)-3-phosphoshikimate + phosphate. Its pathway is metabolic intermediate biosynthesis; chorismate biosynthesis. Its function is as follows. Catalyzes the transfer of the enolpyruvyl moiety of phosphoenolpyruvate (PEP) to the 5-hydroxyl of shikimate-3-phosphate (S3P) to produce enolpyruvyl shikimate-3-phosphate and inorganic phosphate. The sequence is that of 3-phosphoshikimate 1-carboxyvinyltransferase from Pyrococcus furiosus (strain ATCC 43587 / DSM 3638 / JCM 8422 / Vc1).